We begin with the raw amino-acid sequence, 115 residues long: U3-lycotoxin-Ls1l (115 aa).

Residues 1–20 (MKFVLLFGVLLVTLFSYSSA) form the signal peptide. Residues 21–44 (EMLDDFDQADEDELLSLIEKEEAR) constitute a propeptide that is removed on maturation. Intrachain disulfides connect Cys-55–Cys-72, Cys-62–Cys-87, and Cys-74–Cys-85.

The protein belongs to the neurotoxin 19 (CSTX) family. 01 subfamily. Expressed by the venom gland.

Its subcellular location is the secreted. This is U3-lycotoxin-Ls1l from Lycosa singoriensis (Wolf spider).